A 258-amino-acid chain; its full sequence is Uroplakin-1a (258 aa).

The Cytoplasmic segment spans residues 1–14 (MASAAAATTEKGSP). Residues 15 to 35 (VVVGLLVMGNIIILLSGLALF) form a helical membrane-spanning segment. The Extracellular portion of the chain corresponds to 36 to 59 (AETVWVTADQYRIYPLMGVSGKDD). The chain crosses the membrane as a helical span at residues 60 to 86 (VFAGAWIAIFCGFSFFVVASFGVGAAL). Topologically, residues 87 to 91 (CRRRS) are cytoplasmic. The chain crosses the membrane as a helical span at residues 92–112 (MILTYLILMLIIYIFECASCI). Topologically, residues 113–230 (TSYTHRDYMV…HIGHAIDSYT (118 aa)) are extracellular. N170 carries N-linked (GlcNAc...) asparagine glycosylation. A helical transmembrane segment spans residues 231–252 (WGISWFGFAILMWTLPVMLIAM). Topologically, residues 253-258 (YFYTTL) are cytoplasmic.

Belongs to the tetraspanin (TM4SF) family. As to quaternary structure, homodimer; disulfide-linked. Interacts with uroplakin-2 (UPK2). Post-translationally, the N-terminus is blocked. In terms of processing, N-glycosylated with high-mannose oligosaccharides. In terms of tissue distribution, bladder epithelium.

It is found in the membrane. Component of the asymmetric unit membrane (AUM); a highly specialized biomembrane elaborated by terminally differentiated urothelial cells. May play an important role in normal bladder epithelial physiology, possibly in regulating membrane permeability of superficial umbrella cells or in stabilizing the apical membrane through AUM/cytoskeletal interactions. This is Uroplakin-1a (UPK1A) from Bos taurus (Bovine).